Reading from the N-terminus, the 789-residue chain is Spermatogenesis-associated protein 20 (789 aa).

Basic residues predominate over residues 1–19; the sequence is MSHHSPPPPKHKGEHKGHG. The interval 1–65 is disordered; it reads MSHHSPPPPK…CPPPAPQKTA (65 aa). A phosphoserine mark is found at serine 5 and serine 652.

Testis-specific and age-dependent (at protein level). Highly expressed. Expressed in round spermatids located in the inner half-layer of the seminiferous epithelium as well as in early elongated spermatids having cytoplasmic protrusions into the tubular lumen.

It is found in the secreted. May play a role in fertility regulation. This is Spermatogenesis-associated protein 20 (Spata20) from Rattus norvegicus (Rat).